An 866-amino-acid chain; its full sequence is Probable outer membrane usher protein ElfC (866 aa).

An N-terminal signal peptide occupies residues 1-35 (MYRTHRQHSLLSSGGVPSFIGGLVVFVSAAFNAQA).

This sequence belongs to the fimbrial export usher family.

It is found in the cell outer membrane. Its function is as follows. Part of the elfADCG fimbrial operon, which could be required for adherence to host epithelial cells. Could be involved in the export and assembly of the ElfA fimbrial subunits across the outer membrane. The chain is Probable outer membrane usher protein ElfC (elfC) from Escherichia coli O157:H7.